The following is a 277-amino-acid chain: Carbonyl reductase [NADPH] 1 (277 aa).

Serine 2 is subject to N-acetylserine. Phosphoserine is present on residues serine 2 and serine 30. NADP(+) is bound by residues 10–34 (VTGA…GDVV), 63–64 (DI), and asparagine 90. Glutathione-binding positions include 95–97 (FKT) and glutamine 106. Serine 140 contacts substrate. 193–194 (AY) contributes to the glutathione binding site. The active-site Proton acceptor is tyrosine 194. NADP(+)-binding positions include 194 to 198 (YGVTK) and 231 to 233 (VRT). An N6-1-carboxyethyl lysine modification is found at lysine 239.

It belongs to the short-chain dehydrogenases/reductases (SDR) family. In terms of assembly, monomer.

It localises to the cytoplasm. The enzyme catalyses a secondary alcohol + NADP(+) = a ketone + NADPH + H(+). The catalysed reaction is prostaglandin F2alpha + NADP(+) = prostaglandin E2 + NADPH + H(+). It catalyses the reaction prostaglandin E1 + NADP(+) = 15-oxoprostaglandin E1 + NADPH + H(+). It carries out the reaction menadione + NADPH + H(+) = menadiol + NADP(+). The enzyme catalyses prostaglandin D2 + NADP(+) = 15-oxoprostaglandin D2 + NADPH + H(+). The catalysed reaction is prostaglandin E2 + NADP(+) = 15-oxoprostaglandin E2 + NADPH + H(+). It catalyses the reaction prostaglandin F2alpha + NADP(+) = 15-oxoprostaglandin F2alpha + NADPH + H(+). It carries out the reaction daunorubicin + NADPH + H(+) = 13-dihydrodaunorubicin + NADP(+). The enzyme catalyses S-nitrosoglutathione + NADPH + H(+) = S-(hydroxysulfenamide)glutathione + NADP(+). The catalysed reaction is a primary alcohol + NADP(+) = an aldehyde + NADPH + H(+). It catalyses the reaction cortisol + NADPH + H(+) = 20beta-dihydrocortisol + NADP(+). It carries out the reaction corticosterone + NADPH + H(+) = 20beta-dihydrocorticosterone + NADP(+). In terms of biological role, NADPH-dependent reductase with broad substrate specificity. Catalyzes the reduction of a wide variety of carbonyl compounds including quinones, prostaglandins, menadione, plus various xenobiotics. Catalyzes the reduction of the antitumor anthracyclines doxorubicin and daunorubicin to the cardiotoxic compounds doxorubicinol and daunorubicinol. Can convert prostaglandin E to prostaglandin F2-alpha. Can bind glutathione, which explains its higher affinity for glutathione-conjugated substrates. Catalyzes the reduction of S-nitrosoglutathione. In addition, participates in the glucocorticoid metabolism by catalyzing the NADPH-dependent cortisol/corticosterone into 20beta-dihydrocortisol (20b-DHF) or 20beta-corticosterone (20b-DHB), which are weak agonists of NR3C1 and NR3C2 in adipose tissue. The protein is Carbonyl reductase [NADPH] 1 of Bos taurus (Bovine).